We begin with the raw amino-acid sequence, 131 residues long: Large-conductance mechanosensitive channel (131 aa).

Transmembrane regions (helical) follow at residues 21–41 and 76–96; these read VGVIIGGAFGKIVSSLVADVI and GMFIQNIFDFIIIAFAIFLMI.

This sequence belongs to the MscL family. As to quaternary structure, homopentamer.

The protein localises to the cell inner membrane. Functionally, channel that opens in response to stretch forces in the membrane lipid bilayer. May participate in the regulation of osmotic pressure changes within the cell. The sequence is that of Large-conductance mechanosensitive channel from Histophilus somni (strain 129Pt) (Haemophilus somnus).